A 265-amino-acid chain; its full sequence is MKIAIAGASGRMGRMLIEAVLNDADAQLVGALDRAGSPFLGQDAGAFLGKDTGIKLTDDLDAVFAQAEYLIDFTRPEGTMAHIAAALRHDVKLVIGTTGFTAEQKAELQAAAGKIGIVFAANMSVGVNVTLKLLEFAAKHFSHGYDIEIIEAHHRHKVDAPSGTALMMGEAVAGALGRSLDDCAVYGRHGVTGERDPSSIGFAAVRGGDIVGDHTVLFAGIGERIEITHKSSSRVSYAQGALRAVRFLSARGAGLFDMQDVLGLR.

NAD(+) is bound by residues 7–12 (GASGRM) and aspartate 33. An NADP(+)-binding site is contributed by arginine 34. Residues 96 to 98 (GTT) and 120 to 123 (AANM) contribute to the NAD(+) site. Histidine 153 functions as the Proton donor/acceptor in the catalytic mechanism. Residue histidine 154 coordinates (S)-2,3,4,5-tetrahydrodipicolinate. Residue lysine 157 is the Proton donor of the active site. 163–164 (GT) provides a ligand contact to (S)-2,3,4,5-tetrahydrodipicolinate.

Belongs to the DapB family.

It is found in the cytoplasm. It carries out the reaction (S)-2,3,4,5-tetrahydrodipicolinate + NAD(+) + H2O = (2S,4S)-4-hydroxy-2,3,4,5-tetrahydrodipicolinate + NADH + H(+). The catalysed reaction is (S)-2,3,4,5-tetrahydrodipicolinate + NADP(+) + H2O = (2S,4S)-4-hydroxy-2,3,4,5-tetrahydrodipicolinate + NADPH + H(+). The protein operates within amino-acid biosynthesis; L-lysine biosynthesis via DAP pathway; (S)-tetrahydrodipicolinate from L-aspartate: step 4/4. In terms of biological role, catalyzes the conversion of 4-hydroxy-tetrahydrodipicolinate (HTPA) to tetrahydrodipicolinate. This chain is 4-hydroxy-tetrahydrodipicolinate reductase, found in Burkholderia cenocepacia (strain ATCC BAA-245 / DSM 16553 / LMG 16656 / NCTC 13227 / J2315 / CF5610) (Burkholderia cepacia (strain J2315)).